Here is a 285-residue protein sequence, read N- to C-terminus: Polyamine aminopropyltransferase (285 aa).

The PABS domain maps to 5–241 (DNWYIEHFQP…GWWSVTMASK (237 aa)). S-methyl-5'-thioadenosine is bound at residue glutamine 35. Spermidine contacts are provided by histidine 66 and aspartate 90. S-methyl-5'-thioadenosine is bound by residues aspartate 110 and 141-142 (DG). The Proton acceptor role is filled by aspartate 160. Position 160–163 (160–163 (DSTD)) interacts with spermidine. Proline 167 contributes to the S-methyl-5'-thioadenosine binding site.

The protein belongs to the spermidine/spermine synthase family. Homodimer or homotetramer.

The protein resides in the cytoplasm. The enzyme catalyses S-adenosyl 3-(methylsulfanyl)propylamine + putrescine = S-methyl-5'-thioadenosine + spermidine + H(+). Its pathway is amine and polyamine biosynthesis; spermidine biosynthesis; spermidine from putrescine: step 1/1. Catalyzes the irreversible transfer of a propylamine group from the amino donor S-adenosylmethioninamine (decarboxy-AdoMet) to putrescine (1,4-diaminobutane) to yield spermidine. In Xanthomonas euvesicatoria pv. vesicatoria (strain 85-10) (Xanthomonas campestris pv. vesicatoria), this protein is Polyamine aminopropyltransferase.